Reading from the N-terminus, the 480-residue chain is REST corepressor 1 (480 aa).

The interval 1 to 105 is disordered; the sequence is MPAMVEKGPE…GGGMRVGPQY (105 aa). 2 stretches are compositionally biased toward low complexity: residues 21–58 and 66–89; these read AASAASAAASAASAAASAAASAGTASASAAAAASAAAA and SLAAAAPNGNSGSNSWEEGSSGSS. An interaction with HDAC1 region spans residues 72-251; sequence PNGNSGSNSW…RHARKQKRER (180 aa). In terms of domain architecture, ELM2 spans 97-183; sequence GGMRVGPQYQ…KSLADLPNFT (87 aa). Residue lysine 116 forms a Glycyl lysine isopeptide (Lys-Gly) (interchain with G-Cter in SUMO2) linkage. A Phosphoserine modification is found at serine 121. Residues 184-235 form the SANT 1 domain; that stretch reads PFPDEWTVEDKVLFEQAFSFHGKTFHRIQQMLPDKSIASLVKFYYSWKKTRT. Residues 238 to 265 adopt a coiled-coil conformation; the sequence is SVMDRHARKQKREREESEDELEETNGSN. Positions 238-308 are disordered; it reads SVMDRHARKQ…AKNRAKRKPP (71 aa). Phosphoserine is present on serine 254. Residues 272 to 282 are compositionally biased toward basic and acidic residues; it reads DPNKESKKEVP. Residues 290–378 are interaction with KDM1A; sequence VKKEKHSTQA…LPEVIQKCNA (89 aa). Lysine 291 participates in a covalent cross-link: Glycyl lysine isopeptide (Lys-Gly) (interchain with G-Cter in SUMO2). A coiled-coil region spans residues 328 to 363; that stretch reads ATTVLRQLDMELVSIKRQIQNIKQTNSALKEKLDGG. The 52-residue stretch at 375 to 426 folds into the SANT 2 domain; the sequence is KCNARWTTEEQLLAVQAIRKYGRDFQAISDVIGNKSVVQVKNFFVNYRRRFN. The segment at 436–466 is disordered; that stretch reads AEHGKDETNGPANQKPVKSPESSIKIPEEED. Serine 454 is modified (phosphoserine). A Glycyl lysine isopeptide (Lys-Gly) (interchain with G-Cter in SUMO2) cross-link involves residue lysine 460.

It belongs to the CoREST family. As to quaternary structure, component of a BHC histone deacetylase complex that contains HDAC1, HDAC2, HMG20B/BRAF35, KDM1A, RCOR1/CoREST and PHF21A/BHC80. The BHC complex may also contain ZMYM2, ZNF217, ZMYM3, GSE1 and GTF2I. Interacts with REST. Interacts with the SMARCE1/BAF57, suggesting that the BHC complex may recruit the ATP-dependent chromatin-remodeling SWI-SNF complex. Interacts directly with GFI1 and GFI1B in a RCOR/GFI/KDM1A/HDAC complex. Interacts with INMS1. Interacts with SOX2. As to expression, expressed in the external germinal layer (EGL) and internal granular layer (IGL) of the cerebellum and in Purkinje cells (at protein level).

The protein localises to the nucleus. Functionally, essential component of the BHC complex, a corepressor complex that represses transcription of neuron-specific genes in non-neuronal cells. The BHC complex is recruited at RE1/NRSE sites by REST and acts by deacetylating and demethylating specific sites on histones, thereby acting as a chromatin modifier. In the BHC complex, it serves as a molecular beacon for the recruitment of molecular machinery, including MeCP2 and SUV39H1, that imposes silencing across a chromosomal interval. Plays a central role in demethylation of Lys-4 of histone H3 by promoting demethylase activity of KDM1A on core histones and nucleosomal substrates. It also protects KDM1A from the proteasome. Component of a RCOR/GFI/KDM1A/HDAC complex that suppresses, via histone deacetylase (HDAC) recruitment, a number of genes implicated in multilineage blood cell development and controls hematopoietic differentiation. This is REST corepressor 1 (Rcor1) from Mus musculus (Mouse).